We begin with the raw amino-acid sequence, 493 residues long: uncharacterized protein (493 aa).

Residues leucine 10–tyrosine 30 form a helical membrane-spanning segment. N-linked (GlcNAc...) asparagine glycosylation is found at asparagine 35, asparagine 47, and asparagine 69. Helical transmembrane passes span methionine 85 to alanine 105, arginine 112 to alanine 132, alanine 144 to tryptophan 164, glycine 175 to leucine 195, proline 205 to valine 225, and alanine 272 to valine 292. The N-linked (GlcNAc...) asparagine glycan is linked to asparagine 305. 4 helical membrane passes run alanine 311–alanine 331, alanine 348–glycine 368, valine 375–valine 395, and glycine 406–valine 426. Residue asparagine 433 is glycosylated (N-linked (GlcNAc...) asparagine). Residues methionine 441 to alanine 461 form a helical membrane-spanning segment.

It belongs to the major facilitator superfamily. Sodium/anion cotransporter family.

It localises to the membrane. This is an uncharacterized protein from Caenorhabditis elegans.